The primary structure comprises 218 residues: Uracil-DNA glycosylase (218 aa).

Catalysis depends on aspartate 68, which acts as the Proton acceptor.

This sequence belongs to the uracil-DNA glycosylase (UDG) superfamily. UNG family. As to quaternary structure, homodimer. Interacts with protein OPG148. Component of the Uracil-DNA glycosylase(UDG)-OPG148-polymerase complex; OPG148 and UDG form a heterodimeric processivity factor that associates with OPG71 to form the processive polymerase holoenzyme.

The catalysed reaction is Hydrolyzes single-stranded DNA or mismatched double-stranded DNA and polynucleotides, releasing free uracil.. Functionally, plays an essential role in viral replication as a component of the DNA polymerase processivity factor. Excises uracil residues from the DNA which can arise as a result of misincorporation of dUMP residues by DNA polymerase or due to deamination of cytosine. This is Uracil-DNA glycosylase (OPG116) from Variola virus.